A 486-amino-acid chain; its full sequence is Vacuolar protein sorting-associated protein 73 (486 aa).

Over 1–26 the chain is Cytoplasmic; sequence MNRILSSASLLSNVSMPRQNKHKITK. A helical transmembrane segment spans residues 27-47; that stretch reads ALCYAIIVASIGSIQFGYHLS. Residues 48 to 90 are Mitochondrial intermembrane-facing; the sequence is ELNAPQQVLSCSEFDIPMEGYPYDRTWLGKRGYKQCIPLNDEQ. Residues 91–111 traverse the membrane as a helical segment; sequence IGIVTSVFCIGGILGSYFATS. Residues 112-119 lie on the Cytoplasmic side of the membrane; it reads LANIYGRK. The helical transmembrane segment at 120–140 threads the bilayer; sequence FSSLINCTLNIVGSLIIFNSN. The Mitochondrial intermembrane segment spans residues 141–146; the sequence is SYRGLI. The helical transmembrane segment at 147–167 threads the bilayer; it reads IGRILVGISCGSLIVIIPLFI. Residues 168–178 are Cytoplasmic-facing; sequence KEVAPSGWEGL. The chain crosses the membrane as a helical span at residues 179–199; that stretch reads LGSMTQICIRLGVLLTQGIAL. The Mitochondrial intermembrane segment spans residues 200–208; the sequence is PLTDSYRWR. A helical membrane pass occupies residues 209–229; it reads WILFGSFLIAVLNFFMWFIVD. The Cytoplasmic segment spans residues 230–305; the sequence is ESPKWLLAHG…RDRTNVKSRH (76 aa). The helical transmembrane segment at 306 to 326 threads the bilayer; sequence VITVLLFGQQFCGINSIVLYG. Residues 327-342 are Mitochondrial intermembrane-facing; sequence TKIISQLYPQHAIRIN. The chain crosses the membrane as a helical span at residues 343 to 363; sequence FFISMVNVLVTILVSLLIHSL. Residues 364-366 lie on the Cytoplasmic side of the membrane; that stretch reads PRK. A helical transmembrane segment spans residues 367–387; sequence PLLMTSTVLVSVTAFIMGIAM. Residues 388-396 lie on the Mitochondrial intermembrane side of the membrane; that stretch reads NHNKMNLLI. The chain crosses the membrane as a helical span at residues 397–417; that stretch reads VFSFIYMGVFTMGLNPLPFII. Topologically, residues 418–432 are cytoplasmic; that stretch reads MREVSKPQDMVLAQR. The helical transmembrane segment at 433–453 threads the bilayer; the sequence is YGTICNWVGTFIIAYTFPIIH. Asp454 is a topological domain (mitochondrial intermembrane). A helical transmembrane segment spans residues 455–475; it reads VLSGYVFIIFAIIACSISAFI. Residues 476–486 lie on the Cytoplasmic side of the membrane; sequence WKKVPETKRSG.

The protein belongs to the major facilitator superfamily. Sugar transporter (TC 2.A.1.1) family.

It is found in the mitochondrion membrane. In terms of biological role, may be involved in vacuolar protein sorting. The chain is Vacuolar protein sorting-associated protein 73 (VPS73) from Saccharomyces cerevisiae (strain ATCC 204508 / S288c) (Baker's yeast).